Here is a 270-residue protein sequence, read N- to C-terminus: Dermonecrotic toxin LhSicTox-alphaIA2aiii (270 aa).

Residue His-2 is part of the active site. Residues Glu-22 and Asp-24 each coordinate Mg(2+). Catalysis depends on His-38, which acts as the Nucleophile. Disulfide bonds link Cys-42–Cys-48 and Cys-44–Cys-187. Asp-82 lines the Mg(2+) pocket.

The protein belongs to the arthropod phospholipase D family. Class II subfamily. The cofactor is Mg(2+). As to expression, expressed by the venom gland.

The protein localises to the secreted. It carries out the reaction an N-(acyl)-sphingosylphosphocholine = an N-(acyl)-sphingosyl-1,3-cyclic phosphate + choline. The enzyme catalyses an N-(acyl)-sphingosylphosphoethanolamine = an N-(acyl)-sphingosyl-1,3-cyclic phosphate + ethanolamine. It catalyses the reaction a 1-acyl-sn-glycero-3-phosphocholine = a 1-acyl-sn-glycero-2,3-cyclic phosphate + choline. The catalysed reaction is a 1-acyl-sn-glycero-3-phosphoethanolamine = a 1-acyl-sn-glycero-2,3-cyclic phosphate + ethanolamine. Dermonecrotic toxins cleave the phosphodiester linkage between the phosphate and headgroup of certain phospholipids (sphingolipid and lysolipid substrates), forming an alcohol (often choline) and a cyclic phosphate. This toxin acts on sphingomyelin (SM). It may also act on ceramide phosphoethanolamine (CPE), lysophosphatidylcholine (LPC) and lysophosphatidylethanolamine (LPE), but not on lysophosphatidylserine (LPS), and lysophosphatidylglycerol (LPG). It acts by transphosphatidylation, releasing exclusively cyclic phosphate products as second products. Induces dermonecrosis, hemolysis, increased vascular permeability, edema, inflammatory response, and platelet aggregation. The protein is Dermonecrotic toxin LhSicTox-alphaIA2aiii of Loxosceles hirsuta (Recluse spider).